We begin with the raw amino-acid sequence, 535 residues long: Triacylglyceride transporter MHAS_02168/C731_2106 (535 aa).

Residues 1–18 are Cytoplasmic-facing; the sequence is MAFPQTPNRLIRPRRTSR. The chain crosses the membrane as a helical span at residues 19 to 39; the sequence is GIAISAGGLAVLLGALDTYVV. Residues 40–60 are Periplasmic-facing; the sequence is VSIVTDIMRDVGIAVNQIQRV. A helical transmembrane segment spans residues 61–82; the sequence is TPIITGYLLGYIAAMPLLGRAS. Topologically, residues 83 to 86 are cytoplasmic; it reads DRFG. The helical transmembrane segment at 87-107 threads the bilayer; it reads RKLLIQISLAGFALGSVITAL. Topologically, residues 108 to 111 are periplasmic; it reads ATNL. Residues 112–136 traverse the membrane as a helical segment; sequence DVLVAGRVIQGAASGALLPVTLALA. Residues 137-145 lie on the Cytoplasmic side of the membrane; it reads ADLWATHKR. The helical transmembrane segment at 146-167 threads the bilayer; it reads AAVLGGVGAAQELGAVLGPIYG. Over 168–177 the chain is Periplasmic; that stretch reads IFVVWLFHHW. The helical transmembrane segment at 178 to 198 threads the bilayer; the sequence is QAVFWVNVPLALIAMVLIHIS. Over 199–212 the chain is Cytoplasmic; that stretch reads LPPRVRTEEPQRVD. Residues 213–230 form a helical membrane-spanning segment; the sequence is VTGGLLLALALGLATIGL. The Periplasmic segment spans residues 231–243; that stretch reads YNAEPDGKQVLPE. Residues 244 to 263 traverse the membrane as a helical segment; the sequence is YGPPLIIGAVIAAVAFLVWE. Residues 264–278 lie on the Cytoplasmic side of the membrane; sequence RFARTRLLDPAGVRF. Residues 279 to 300 form a helical membrane-spanning segment; that stretch reads RPFLIALLVSLVTGGALMVTLV. Topologically, residues 301–320 are periplasmic; that stretch reads NVELFGQGVLGLDQDEAVFL. 2 helical membrane passes run 321 to 343 and 344 to 364; these read LARF…TRVG and DRAV…LIAQ. Residues 365–384 are Periplasmic-facing; that stretch reads WPADVLESRHDLGFVSLPTL. A beta-hairpin region spans residues 373–382; that stretch reads RHDLGFVSLP. A helical membrane pass occupies residues 385 to 407; the sequence is DTDLAIAGFGLGLVIAPLTSAAL. At 408–415 the chain is on the cytoplasmic side; it reads RVVPAAQH. Residues 416-440 traverse the membrane as a helical segment; the sequence is GIASAAVVVARMIGMLIGIAALSAW. Residues 441–487 are Periplasmic-facing; that stretch reads GLYRFNQYLKEQLAALPPAPADFPGGQMAGQMMRLRTATVQAYVLQY. Residues 488–507 traverse the membrane as a helical segment; that stretch reads GEIFAITAGLCVFGAVLGLF. The Cytoplasmic segment spans residues 508 to 535; that stretch reads IAGRREHAEESADAVDGVSNARDRAPSA.

This sequence belongs to the major facilitator superfamily. P55 (TC 2.A.1.3.34) family.

The protein localises to the cell inner membrane. Its function is as follows. In association with lipoprotein LprG transports triacylglycerides (TAG) across the inner cell membrane, probably transfering them to lipoprotein LprG in the periplasm. TAG probably regulates lipid metabolism and growth regulation and plays a structural role in the outer membrane. Mutagenesis and molecular modeling suggests TAG (and maybe other lipids) enters the central cavity of the P55 transporter from within the cell inner membrane via clefts on the cytoplasmic face of P55 between TM5-TM8 and TM2-TM11. From there the lipid is probably transferred to the hydrophobic cavity of LprG. The lprG-MHAS_02167/C731_2107 operon complements the vancomycin sensitivity of an M.smegmatis knockout of the same operon. Probably required with LprG for normal surface localization of lipoarabinomannan (LAM). The chain is Triacylglyceride transporter MHAS_02168/C731_2106 from Mycolicibacterium hassiacum (strain DSM 44199 / CIP 105218 / JCM 12690 / 3849) (Mycobacterium hassiacum).